A 111-amino-acid polypeptide reads, in one-letter code: UPF0339 protein in ptx operon 5'region (111 aa).

A run of 2 repeats spans residues 10–58 (DKAG…RYER) and 61–109 (SGAD…VVEV).

Belongs to the UPF0339 family. Duplicated subfamily.

This is UPF0339 protein in ptx operon 5'region from Stutzerimonas stutzeri (Pseudomonas stutzeri).